A 397-amino-acid chain; its full sequence is Carbamoyl phosphate synthase small chain (397 aa).

The interval 1-204 is CPSase; the sequence is MKHVLRKEKT…NAKLKEKIWH (204 aa). Residues Ser-57, Gly-252, and Gly-254 each contribute to the L-glutamine site. The 188-residue stretch at 204 to 391 folds into the Glutamine amidotransferase type-1 domain; that stretch reads HVVVYDFGVK…IKLMKKSYNS (188 aa). The active-site Nucleophile is Cys-280. The L-glutamine site is built by Leu-281, Gln-284, Asn-322, and Tyr-325. Catalysis depends on residues His-364 and Glu-366.

The protein belongs to the CarA family. As to quaternary structure, composed of two chains; the small (or glutamine) chain promotes the hydrolysis of glutamine to ammonia, which is used by the large (or ammonia) chain to synthesize carbamoyl phosphate. Tetramer of heterodimers (alpha,beta)4.

The catalysed reaction is hydrogencarbonate + L-glutamine + 2 ATP + H2O = carbamoyl phosphate + L-glutamate + 2 ADP + phosphate + 2 H(+). It carries out the reaction L-glutamine + H2O = L-glutamate + NH4(+). The protein operates within amino-acid biosynthesis; L-arginine biosynthesis; carbamoyl phosphate from bicarbonate: step 1/1. Its pathway is pyrimidine metabolism; UMP biosynthesis via de novo pathway; (S)-dihydroorotate from bicarbonate: step 1/3. In terms of biological role, small subunit of the glutamine-dependent carbamoyl phosphate synthetase (CPSase). CPSase catalyzes the formation of carbamoyl phosphate from the ammonia moiety of glutamine, carbonate, and phosphate donated by ATP, constituting the first step of 2 biosynthetic pathways, one leading to arginine and/or urea and the other to pyrimidine nucleotides. The small subunit (glutamine amidotransferase) binds and cleaves glutamine to supply the large subunit with the substrate ammonia. This Buchnera aphidicola subsp. Baizongia pistaciae (strain Bp) protein is Carbamoyl phosphate synthase small chain.